Reading from the N-terminus, the 380-residue chain is Cytochrome b (380 aa).

The next 4 helical transmembrane spans lie at 34–54 (FGSL…LLAA), 78–99 (WLLR…YLHI), 114–134 (WNTG…GYVL), and 179–199 (FFAL…IHLT). 2 residues coordinate heme b: H84 and H98. Heme b-binding residues include H183 and H197. H202 is a binding site for a ubiquinone. Helical transmembrane passes span 227-247 (LKDI…ALFH), 289-309 (LGGV…PFLH), 321-341 (LSQL…WIGS), and 348-368 (FIII…VLFP).

The protein belongs to the cytochrome b family. The cytochrome bc1 complex contains 11 subunits: 3 respiratory subunits (MT-CYB, CYC1 and UQCRFS1), 2 core proteins (UQCRC1 and UQCRC2) and 6 low-molecular weight proteins (UQCRH/QCR6, UQCRB/QCR7, UQCRQ/QCR8, UQCR10/QCR9, UQCR11/QCR10 and a cleavage product of UQCRFS1). This cytochrome bc1 complex then forms a dimer. It depends on heme b as a cofactor.

It localises to the mitochondrion inner membrane. Component of the ubiquinol-cytochrome c reductase complex (complex III or cytochrome b-c1 complex) that is part of the mitochondrial respiratory chain. The b-c1 complex mediates electron transfer from ubiquinol to cytochrome c. Contributes to the generation of a proton gradient across the mitochondrial membrane that is then used for ATP synthesis. The polypeptide is Cytochrome b (MT-CYB) (Trogon curucui (Blue-crowned trogon)).